The following is a 445-amino-acid chain: C4-dicarboxylate transport protein (445 aa).

8 helical membrane-spanning segments follow: residues 17–37 (FYQILYVQVLVAIVIGVLLGY), 56–76 (LVKMIIAPVIFLTVTTGIAAM), 91–111 (VYFLVFSTLALIIGMVVSHIV), 157–177 (FVGGDILQVLFVAVLFGLSLA), 200–220 (LVAILMKAAPIGAFGAMAFTI), 233–253 (MLVGTFYATSVLFVVVVLGMV), 319–339 (IYMTMAALFIAQACDIPLSLG), and 367–387 (AATLSVVPTVPVAGMALILGV).

This sequence belongs to the dicarboxylate/amino acid:cation symporter (DAACS) (TC 2.A.23) family.

It localises to the cell inner membrane. Its function is as follows. Responsible for the transport of dicarboxylates such as succinate, fumarate, and malate from the periplasm across the membrane. The polypeptide is C4-dicarboxylate transport protein (Bordetella avium (strain 197N)).